The primary structure comprises 100 residues: Large ribosomal subunit protein uL23 (100 aa).

The protein belongs to the universal ribosomal protein uL23 family. In terms of assembly, part of the 50S ribosomal subunit. Contacts protein L29, and trigger factor when it is bound to the ribosome.

Functionally, one of the early assembly proteins it binds 23S rRNA. One of the proteins that surrounds the polypeptide exit tunnel on the outside of the ribosome. Forms the main docking site for trigger factor binding to the ribosome. The sequence is that of Large ribosomal subunit protein uL23 from Aeromonas salmonicida (strain A449).